We begin with the raw amino-acid sequence, 255 residues long: UPF0246 protein Caul_4480 (255 aa).

The protein belongs to the UPF0246 family.

The polypeptide is UPF0246 protein Caul_4480 (Caulobacter sp. (strain K31)).